Consider the following 237-residue polypeptide: Probable transcriptional regulatory protein Exig_1693 (237 aa).

It belongs to the TACO1 family. YeeN subfamily.

The protein resides in the cytoplasm. The polypeptide is Probable transcriptional regulatory protein Exig_1693 (Exiguobacterium sibiricum (strain DSM 17290 / CCUG 55495 / CIP 109462 / JCM 13490 / 255-15)).